A 185-amino-acid chain; its full sequence is Elongation factor P (185 aa).

Belongs to the elongation factor P family.

The protein localises to the cytoplasm. Its pathway is protein biosynthesis; polypeptide chain elongation. Functionally, involved in peptide bond synthesis. Stimulates efficient translation and peptide-bond synthesis on native or reconstituted 70S ribosomes in vitro. Probably functions indirectly by altering the affinity of the ribosome for aminoacyl-tRNA, thus increasing their reactivity as acceptors for peptidyl transferase. In Trichodesmium erythraeum (strain IMS101), this protein is Elongation factor P.